The primary structure comprises 153 residues: Calmodulin-like protein 3 (153 aa).

4 consecutive EF-hand domains span residues 1–36 (MDQA…LGIY), 37–72 (IPDK…IMEE), 74–109 (DEEE…LGLK), and 112–147 (RTLE…GGFA). The Ca(2+) site is built by D14, N16, D18, K20, E25, D50, N52, D54, Y56, E61, D87, N89, D91, E98, D125, D127, D129, M131, and E136.

Belongs to the calmodulin family.

In terms of biological role, potential calcium sensor. This Arabidopsis thaliana (Mouse-ear cress) protein is Calmodulin-like protein 3 (CML3).